Reading from the N-terminus, the 23-residue chain is Augerpeptide hhe7a (23 aa).

3 disulfide bridges follow: cysteine 3/cysteine 11, cysteine 6/cysteine 19, and cysteine 10/cysteine 22.

As to expression, expressed by the venom duct.

It localises to the secreted. In terms of biological role, causes abnormal twist followed by immobility when injected into C.elegans. This is Augerpeptide hhe7a from Hastula hectica (Sea snail).